The following is a 543-amino-acid chain: Oxalate--CoA ligase (543 aa).

196–207 is a binding site for ATP; the sequence is HTSGTTSTPKTV. Residues 410–458 carry the FACS motif; sequence ENYFRTGDQGYFDPEGFLVLTGRIKELINRGGEKISPIELDGIMLSHPK. Residues 541-543 carry the C-terminal peroxisome targeting signal (PTS1) motif; the sequence is SKL.

Belongs to the ATP-dependent AMP-binding enzyme family. Interacts with PEX5.

The protein localises to the peroxisome matrix. The protein resides in the peroxisome membrane. The enzyme catalyses oxalate + ATP + CoA = oxalyl-CoA + AMP + diphosphate. Its function is as follows. Catalyzes the first step in a degradation pathway of oxalate to CO(2) to protect the cell against the harmful effects of oxalate derived from endogenous processes or an environmental sources. This chain is Oxalate--CoA ligase, found in Saccharomyces cerevisiae (strain ATCC 204508 / S288c) (Baker's yeast).